The sequence spans 224 residues: 4'-phosphopantetheinyl transferase ffp (224 aa).

Mg(2+) is bound by residues Asp107, Glu109, and Glu151. A peptidyl carrier protein binding region spans residues 158-189 (GKGLSLPLDSFSVRLHEDGRVSVELPEHHTPC).

It belongs to the P-Pant transferase superfamily. Gsp/Sfp/HetI/AcpT family. Requires Mg(2+) as cofactor.

It catalyses the reaction apo-[peptidyl-carrier protein] + CoA = holo-[peptidyl-carrier protein] + adenosine 3',5'-bisphosphate + H(+). May activate the peptidyl carrier protein (PCP) domains of fengycin synthase by transferring the 4'-phosphopantetheinyl moiety of coenzyme A (CoA) to a serine residue. This Bacillus subtilis protein is 4'-phosphopantetheinyl transferase ffp (ffp).